We begin with the raw amino-acid sequence, 309 residues long: Probable 2,4-dienoyl-CoA reductase 3 [(3E)-enoyl-CoA-producing] (309 aa).

NADP(+) is bound by residues 32–37 (GGGTGI), Arg-57, and Asp-83. Arg-57 is a binding site for substrate. The substrate site is built by Phe-116 and Ser-124. Tyr-166 serves as the catalytic Proton acceptor. Residues Lys-181 and 207–210 (PGPI) contribute to the NADP(+) site. Position 218 (Arg-218) interacts with substrate.

It belongs to the short-chain dehydrogenases/reductases (SDR) family. 2,4-dienoyl-CoA reductase subfamily.

It catalyses the reaction a (2E,4E)-dienoyl-CoA + NADPH + H(+) = a 4,5-saturated-(3E)-enoyl-CoA + NADP(+). It carries out the reaction a (2E,4Z)-dienoyl-CoA + NADPH + H(+) = a 4,5-saturated-(3E)-enoyl-CoA + NADP(+). Functionally, auxiliary enzyme of beta-oxidation. It participates in the metabolism of unsaturated fatty enoyl-CoA esters having double bonds in both even- and odd-numbered positions. Catalyzes the NADP-dependent reduction of 2,4-dienoyl-CoA to yield trans-3-enoyl-CoA. The polypeptide is Probable 2,4-dienoyl-CoA reductase 3 [(3E)-enoyl-CoA-producing] (Caenorhabditis elegans).